Here is an 86-residue protein sequence, read N- to C-terminus: MKSIVFVALFGLALLAVVCSASEDAHKELLKEVVRAVVVDKTDAVQAEERECRWYLGGCSQDGDCCKHLQCHSNYEWCIWDGTFSK.

Positions 1–21 (MKSIVFVALFGLALLAVVCSA) are cleaved as a signal peptide. Positions 22-50 (SEDAHKELLKEVVRAVVVDKTDAVQAEER) are excised as a propeptide. 3 disulfide bridges follow: cysteine 52/cysteine 66, cysteine 59/cysteine 71, and cysteine 65/cysteine 78.

The protein belongs to the neurotoxin 10 (Hwtx-1) family. 17 (Hntx-9) subfamily. As to expression, expressed by the venom gland.

It is found in the secreted. In terms of biological role, ion channel inhibitor. This Cyriopagopus hainanus (Chinese bird spider) protein is Omega-theraphotoxin-Hhn1f 2.